The chain runs to 320 residues: MKHTNSKQKLKDIINFCQAIFTLCIICLYQANISNSYPIYAQQTYENPRESTGRIVCANCHLAQKNIYIEAPKEVLPNTVFETVVKIPYEFNKKQILGNGSKGDLNVGAVVILPEGFKLAPKDRMDEKLLKKTKNLYFNNYSQKLDNIIVIGPITGKDNQEITFPILAPDPQINKNTHFLKYSIYVGANKGRGQLYPSGEKSNNNPIPSNAEGRIEKIKPNEDGGYEVIIKTKDDETISQYVPIGLNLTIKEGQRIKAGEYITTDPNVGGFGQSEIEIVLQNPTRLISFIFFSISVLISQLFFVLKKKQFEKVQSLNQNF.

A signal peptide spans 1–36 (MKHTNSKQKLKDIINFCQAIFTLCIICLYQANISNS). Heme is bound by residues tyrosine 37, cysteine 57, cysteine 60, and histidine 61. The helical transmembrane segment at 286-305 (LISFIFFSISVLISQLFFVL) threads the bilayer.

The protein belongs to the cytochrome f family. In terms of assembly, the 4 large subunits of the cytochrome b6-f complex are cytochrome b6, subunit IV (17 kDa polypeptide, petD), cytochrome f and the Rieske protein, while the 4 small subunits are PetG, PetL, PetM and PetN. The complex functions as a dimer. The cofactor is heme.

It localises to the plastid. The protein resides in the chloroplast thylakoid membrane. In terms of biological role, component of the cytochrome b6-f complex, which mediates electron transfer between photosystem II (PSII) and photosystem I (PSI), cyclic electron flow around PSI, and state transitions. The chain is Cytochrome f (petA) from Cyanidium caldarium (Red alga).